A 517-amino-acid chain; its full sequence is Bifunctional purine biosynthesis protein PurH (517 aa).

The MGS-like domain occupies 1 to 146; that stretch reads MKRLALLSTS…KNFAHLTVLC (146 aa).

Belongs to the PurH family.

It catalyses the reaction (6R)-10-formyltetrahydrofolate + 5-amino-1-(5-phospho-beta-D-ribosyl)imidazole-4-carboxamide = 5-formamido-1-(5-phospho-D-ribosyl)imidazole-4-carboxamide + (6S)-5,6,7,8-tetrahydrofolate. The enzyme catalyses IMP + H2O = 5-formamido-1-(5-phospho-D-ribosyl)imidazole-4-carboxamide. The protein operates within purine metabolism; IMP biosynthesis via de novo pathway; 5-formamido-1-(5-phospho-D-ribosyl)imidazole-4-carboxamide from 5-amino-1-(5-phospho-D-ribosyl)imidazole-4-carboxamide (10-formyl THF route): step 1/1. Its pathway is purine metabolism; IMP biosynthesis via de novo pathway; IMP from 5-formamido-1-(5-phospho-D-ribosyl)imidazole-4-carboxamide: step 1/1. In Trichodesmium erythraeum (strain IMS101), this protein is Bifunctional purine biosynthesis protein PurH.